Here is a 195-residue protein sequence, read N- to C-terminus: Large ribosomal subunit protein uL5 (195 aa).

The protein belongs to the universal ribosomal protein uL5 family. Part of the 50S ribosomal subunit; part of the 5S rRNA/L5/L18/L25 subcomplex. Contacts the 5S rRNA and the P site tRNA. Forms a bridge to the 30S subunit in the 70S ribosome.

Its function is as follows. This is one of the proteins that bind and probably mediate the attachment of the 5S RNA into the large ribosomal subunit, where it forms part of the central protuberance. In the 70S ribosome it contacts protein S13 of the 30S subunit (bridge B1b), connecting the 2 subunits; this bridge is implicated in subunit movement. Contacts the P site tRNA; the 5S rRNA and some of its associated proteins might help stabilize positioning of ribosome-bound tRNAs. This chain is Large ribosomal subunit protein uL5, found in Pelodictyon phaeoclathratiforme (strain DSM 5477 / BU-1).